Consider the following 445-residue polypeptide: Glutamate-1-semialdehyde 2,1-aminomutase (445 aa).

Residue lysine 263 is modified to N6-(pyridoxal phosphate)lysine.

The protein belongs to the class-III pyridoxal-phosphate-dependent aminotransferase family. HemL subfamily. It depends on pyridoxal 5'-phosphate as a cofactor.

The protein localises to the cytoplasm. The catalysed reaction is (S)-4-amino-5-oxopentanoate = 5-aminolevulinate. It functions in the pathway porphyrin-containing compound metabolism; protoporphyrin-IX biosynthesis; 5-aminolevulinate from L-glutamyl-tRNA(Glu): step 2/2. The sequence is that of Glutamate-1-semialdehyde 2,1-aminomutase from Haloarcula marismortui (strain ATCC 43049 / DSM 3752 / JCM 8966 / VKM B-1809) (Halobacterium marismortui).